The primary structure comprises 654 residues: Glutamyl-tRNA(Gln) amidotransferase subunit B, mitochondrial (654 aa).

Residues Met1–Glu8 constitute a mitochondrion transit peptide. The interval Asp79–Thr101 is disordered.

The protein belongs to the GatB/GatE family. GatB subfamily. As to quaternary structure, subunit of the heterotrimeric GatCAB amidotransferase (AdT) complex, composed of A, B and C subunits.

The protein localises to the mitochondrion. The enzyme catalyses L-glutamyl-tRNA(Gln) + L-glutamine + ATP + H2O = L-glutaminyl-tRNA(Gln) + L-glutamate + ADP + phosphate + H(+). In terms of biological role, allows the formation of correctly charged Gln-tRNA(Gln) through the transamidation of misacylated Glu-tRNA(Gln) in the mitochondria. The reaction takes place in the presence of glutamine and ATP through an activated gamma-phospho-Glu-tRNA(Gln). The polypeptide is Glutamyl-tRNA(Gln) amidotransferase subunit B, mitochondrial (Pyricularia oryzae (strain 70-15 / ATCC MYA-4617 / FGSC 8958) (Rice blast fungus)).